We begin with the raw amino-acid sequence, 347 residues long: Guanine nucleotide-binding protein alpha-6 subunit (347 aa).

A G-alpha domain is found at 30–347 (GITQVLLLGA…IIVGHVMDLV (318 aa)). A G1 motif region spans residues 33 to 46 (QVLLLGAGESGKST). GTP-binding positions include 38–45 (GAGESGKS), 172–178 (LRARVTT), 197–201 (DVGGQ), 266–269 (NKKD), and alanine 322. Mg(2+)-binding residues include serine 45 and threonine 178. The G2 motif stretch occupies residues 170 to 178 (DALRARVTT). The tract at residues 193 to 202 (MKIIDVGGQR) is G3 motif. The G4 motif stretch occupies residues 262 to 269 (ILFLNKKD). The tract at residues 320–325 (TIAVDT) is G5 motif.

It belongs to the G-alpha family. As to quaternary structure, g proteins are composed of 3 units; alpha, beta and gamma. The alpha chain contains the guanine nucleotide binding site.

Its function is as follows. Guanine nucleotide-binding proteins (G proteins) are involved as modulators or transducers in various transmembrane signaling systems. G alpha-6 is involved in the folic acid chemotaxis signal transduction pathway. This Dictyostelium discoideum (Social amoeba) protein is Guanine nucleotide-binding protein alpha-6 subunit (gpaF).